The following is a 478-amino-acid chain: Serine/threonine-protein phosphatase T (478 aa).

3 TPR repeats span residues 9–42, 43–76, and 78–110; these read ATAL…YDRE, PSFF…DPAY, and KAYW…EPNN. The segment at 151–463 is catalytic; the sequence is AVDDSYDGVR…QVFEAVPHPD (313 aa). The Mn(2+) site is built by aspartate 221, histidine 223, aspartate 250, and asparagine 282. Histidine 283 (proton donor/acceptor) is an active-site residue. Histidine 331 and histidine 408 together coordinate Mn(2+).

This sequence belongs to the PPP phosphatase family. PP-5 (PP-T) subfamily. It depends on Mg(2+) as a cofactor. Mn(2+) serves as cofactor.

Its subcellular location is the nucleus. The enzyme catalyses O-phospho-L-seryl-[protein] + H2O = L-seryl-[protein] + phosphate. The catalysed reaction is O-phospho-L-threonyl-[protein] + H2O = L-threonyl-[protein] + phosphate. Its function is as follows. Protein phosphatase that specifically binds to and dephosphorylates the molecular chaperone Hsp90. Dephosphorylation positively regulates the Hsp90 chaperone machinery. This is Serine/threonine-protein phosphatase T from Aspergillus oryzae (strain ATCC 42149 / RIB 40) (Yellow koji mold).